Consider the following 205-residue polypeptide: 5'-deoxynucleotidase HDDC2 (205 aa).

Ala2 carries the post-translational modification N-acetylalanine. A phosphoserine mark is found at Ser3 and Ser5. The region spanning 47–149 is the HD domain; sequence VSDHMYRMAV…VKQLDQCEMI (103 aa). Positions 50, 78, 79, 82, 87, 88, and 144 each coordinate a divalent metal cation. A Phosphoserine modification is found at Ser205.

The protein belongs to the HDDC2 family. In terms of assembly, homodimer. Requires Mn(2+) as cofactor. Co(2+) is required as a cofactor. Mg(2+) serves as cofactor.

The enzyme catalyses a 2'-deoxyribonucleoside 5'-phosphate + H2O = a 2'-deoxyribonucleoside + phosphate. Its function is as follows. Catalyzes the dephosphorylation of the nucleoside 5'-monophosphates deoxyadenosine monophosphate (dAMP), deoxycytidine monophosphate (dCMP), deoxyguanosine monophosphate (dGMP) and deoxythymidine monophosphate (dTMP). This chain is 5'-deoxynucleotidase HDDC2 (HDDC2), found in Bos taurus (Bovine).